Reading from the N-terminus, the 127-residue chain is Small ribosomal subunit protein uS11 (127 aa).

It belongs to the universal ribosomal protein uS11 family. As to quaternary structure, part of the 30S ribosomal subunit. Interacts with proteins S7 and S18. Binds to IF-3.

In terms of biological role, located on the platform of the 30S subunit, it bridges several disparate RNA helices of the 16S rRNA. Forms part of the Shine-Dalgarno cleft in the 70S ribosome. The sequence is that of Small ribosomal subunit protein uS11 from Rickettsia canadensis (strain McKiel).